The chain runs to 274 residues: Diaminopimelate epimerase (274 aa).

Substrate is bound by residues N11 and N62. Catalysis depends on C71, which acts as the Proton donor. Substrate contacts are provided by residues 72–73 (GN), N157, N190, and 208–209 (ER). The Proton acceptor role is filled by C217. 218-219 (GT) lines the substrate pocket.

This sequence belongs to the diaminopimelate epimerase family. As to quaternary structure, homodimer.

It localises to the cytoplasm. It catalyses the reaction (2S,6S)-2,6-diaminopimelate = meso-2,6-diaminopimelate. It participates in amino-acid biosynthesis; L-lysine biosynthesis via DAP pathway; DL-2,6-diaminopimelate from LL-2,6-diaminopimelate: step 1/1. In terms of biological role, catalyzes the stereoinversion of LL-2,6-diaminopimelate (L,L-DAP) to meso-diaminopimelate (meso-DAP), a precursor of L-lysine and an essential component of the bacterial peptidoglycan. This is Diaminopimelate epimerase from Elusimicrobium minutum (strain Pei191).